The chain runs to 83 residues: Arminin 3a (83 aa).

A signal peptide spans 1–18 (MKTVFAILFLTFIALTCA). A propeptide spanning residues 19–57 (RNYEDLKEKIKNEVEREIFEDLEEESDELENNFKKFNDA) is cleaved from the precursor. Ala80 is subject to Alanine amide.

The protein belongs to the arminin family. In terms of tissue distribution, expressed in entodermal epithelium along the body column.

Its subcellular location is the secreted. It localises to the target cell membrane. Antimicrobial peptide with a broad-spectrum antimicrobial activity. Keeps its antibacterial activity under a wide range of salt concentrations that mimic physiological conditions of human blood, which is surprising, since Hydra is an obligate freshwater animal with nearly no salt tolerance. Does not affect red blood cells. This chain is Arminin 3a, found in Hydra vulgaris (Hydra).